Reading from the N-terminus, the 501-residue chain is Lysine--tRNA ligase (501 aa).

2 residues coordinate Mg(2+): Glu411 and Glu418.

This sequence belongs to the class-II aminoacyl-tRNA synthetase family. In terms of assembly, homodimer. The cofactor is Mg(2+).

It is found in the cytoplasm. It carries out the reaction tRNA(Lys) + L-lysine + ATP = L-lysyl-tRNA(Lys) + AMP + diphosphate. The chain is Lysine--tRNA ligase from Pseudomonas aeruginosa (strain UCBPP-PA14).